Reading from the N-terminus, the 478-residue chain is Glutamyl-tRNA(Gln) amidotransferase subunit A (478 aa).

Residues Lys68 and Ser143 each act as charge relay system in the active site. Catalysis depends on Ser167, which acts as the Acyl-ester intermediate.

The protein belongs to the amidase family. GatA subfamily. As to quaternary structure, heterotrimer of A, B and C subunits.

It catalyses the reaction L-glutamyl-tRNA(Gln) + L-glutamine + ATP + H2O = L-glutaminyl-tRNA(Gln) + L-glutamate + ADP + phosphate + H(+). In terms of biological role, allows the formation of correctly charged Gln-tRNA(Gln) through the transamidation of misacylated Glu-tRNA(Gln) in organisms which lack glutaminyl-tRNA synthetase. The reaction takes place in the presence of glutamine and ATP through an activated gamma-phospho-Glu-tRNA(Gln). In Mycoplasma pneumoniae (strain ATCC 29342 / M129 / Subtype 1) (Mycoplasmoides pneumoniae), this protein is Glutamyl-tRNA(Gln) amidotransferase subunit A (gatA).